The following is a 447-amino-acid chain: Serine/threonine-protein phosphatase 2A 55 kDa regulatory subunit B delta isoform (447 aa).

WD repeat units follow at residues 26 to 65, 91 to 132, 175 to 213, 224 to 264, 283 to 321, 338 to 379, and 414 to 447; these read AEAD…KSRP, EIEE…KRVE, AHTY…RSFN, ELTE…LCDR, EIIS…RPVE, ENDC…DITL, and DFNK…DKVN.

It belongs to the phosphatase 2A regulatory subunit B family. As to quaternary structure, PP2A consists of a common heterodimeric core enzyme, composed of a 36 kDa catalytic subunit (subunit C) and a 65 kDa constant regulatory subunit (PR65 or subunit A), that associates with a variety of regulatory subunits. Proteins that associate with the core dimer include three families of regulatory subunits B (the R2/B/PR55/B55, R3/B''/PR72/PR130/PR59 and R5/B'/B56 families), the 48 kDa variable regulatory subunit, viral proteins, and cell signaling molecules. Interacts with ensa (when phosphorylated at 'Ser-67') and arpp19 (when phosphorylated at 'Ser-67'), leading to inhibit PP2A activity.

The protein resides in the cytoplasm. In terms of biological role, substrate-recognition subunit of protein phosphatase 2A (PP2A) that plays a key role in cell cycle by controlling mitosis entry and exit. The activity of PP2A complexes containing ppp2r2d (PR55-delta) fluctuate during the cell cycle: the activity is high in interphase and low in mitosis. During mitosis, activity of PP2A is inhibited via interaction with phosphorylated ensa and arpp19 inhibitors. PP2A complexes containing ppp2r2d (PR55-delta) also regulate the activity of TGF-beta/Activin/Nodal signaling by restricting receptor activity. Within the PP2A complexes, the B regulatory subunits modulate substrate selectivity and catalytic activity, and may also direct the localization of the catalytic enzyme to a particular subcellular compartment. This is Serine/threonine-protein phosphatase 2A 55 kDa regulatory subunit B delta isoform (ppp2r2d) from Xenopus laevis (African clawed frog).